Consider the following 90-residue polypeptide: MNYFAVICIFSCICLWQFSDAAPFISVQSSSQSRSQKVMNGMLRTLYDYSVQDSVNDATGHLIQTHKADFNSDVMSPDEIESVRQQLNMA.

The first 21 residues, methionine 1–alanine 21, serve as a signal peptide directing secretion.

In terms of tissue distribution, main cells and secondary cells of the accessory glands of 1 day old virgin males (at protein level). In 5 day old virgin males, only detected in the secondary cells (at protein level). Reappears in the main cells after mating (at protein level). First detected in adult males 3-4 hr after eclosion, levels increase reaching a peak at day 3-5 which is maintained until at least day 10 of adulthood (at protein level). In unmated male adults, levels are maintained for the first 6 days of adulthood and then gradually decrease for at least the next 8 days. No expression in females.

Its subcellular location is the secreted. It localises to the extracellular space. The protein resides in the cytoplasm. Its function is as follows. This protein is transferred from male to female during mating and may affect egglaying and behavior after mating. This chain is Accessory gland-specific peptide 26Ab, found in Drosophila melanogaster (Fruit fly).